Consider the following 268-residue polypeptide: UPF0328 protein ECU09_2030 (268 aa).

This sequence belongs to the UPF0328 family.

This Encephalitozoon cuniculi (strain GB-M1) (Microsporidian parasite) protein is UPF0328 protein ECU09_2030.